Reading from the N-terminus, the 570-residue chain is Proline--tRNA ligase (570 aa).

The protein belongs to the class-II aminoacyl-tRNA synthetase family. ProS type 1 subfamily. In terms of assembly, homodimer.

The protein resides in the cytoplasm. The enzyme catalyses tRNA(Pro) + L-proline + ATP = L-prolyl-tRNA(Pro) + AMP + diphosphate. In terms of biological role, catalyzes the attachment of proline to tRNA(Pro) in a two-step reaction: proline is first activated by ATP to form Pro-AMP and then transferred to the acceptor end of tRNA(Pro). As ProRS can inadvertently accommodate and process non-cognate amino acids such as alanine and cysteine, to avoid such errors it has two additional distinct editing activities against alanine. One activity is designated as 'pretransfer' editing and involves the tRNA(Pro)-independent hydrolysis of activated Ala-AMP. The other activity is designated 'posttransfer' editing and involves deacylation of mischarged Ala-tRNA(Pro). The misacylated Cys-tRNA(Pro) is not edited by ProRS. This is Proline--tRNA ligase from Shewanella sp. (strain MR-7).